Consider the following 175-residue polypeptide: Translation initiation factor IF-3 (175 aa).

Belongs to the IF-3 family. As to quaternary structure, monomer.

It is found in the cytoplasm. Functionally, IF-3 binds to the 30S ribosomal subunit and shifts the equilibrium between 70S ribosomes and their 50S and 30S subunits in favor of the free subunits, thus enhancing the availability of 30S subunits on which protein synthesis initiation begins. This chain is Translation initiation factor IF-3, found in Chromobacterium violaceum (strain ATCC 12472 / DSM 30191 / JCM 1249 / CCUG 213 / NBRC 12614 / NCIMB 9131 / NCTC 9757 / MK).